The primary structure comprises 410 residues: BRCA1-A complex subunit Abraxas 1 (410 aa).

One can recognise an MPN domain in the interval 7-160 (TAVLSGFVLG…HALYKPQKGL (154 aa)). At Ser48 the chain carries Phosphoserine. Positions 208-261 (SLKEVQKINEMYTSLQDELKSICEKVEHSERAVEKLLNDVNRLKGEIKKRKQAQ) form a coiled coil. The segment at 354–410 (DGWQFKKSRLGGIQNRPSKTDTNSSNQEQASTVSSPETDEEIERMKGSGEYPQSPTF) is disordered. Positions 368-389 (NRPSKTDTNSSNQEQASTVSSP) are enriched in polar residues. A phosphoserine mark is found at Ser387 and Ser388. At Thr391 the chain carries Phosphothreonine. At Ser407 the chain carries Phosphoserine. Residues 407–410 (SPTF) carry the pSXXF motif motif.

Belongs to the FAM175 family. Abraxas subfamily. In terms of assembly, component of the ARISC complex, at least composed of UIMC1/RAP80, ABRAXAS1, BRCC3/BRCC36, BABAM2 and BABAM1/NBA1. Component of the BRCA1-A complex, at least composed of the BRCA1, BARD1, UIMC1/RAP80, ABRAXAS1, BRCC3/BRCC36, BABAM2 and BABAM1/NBA1. In the complex, interacts directly with UIMC1/RAP80, BRCC3/BRCC36 and BABAM2. Homodimer. Interacts directly (when phosphorylated at Ser-407) with BRCA1. The phosphorylated homodimer can interact directly with two BRCA1 chains, giving rise to a heterotetramer. Binds polyubiquitin. In terms of processing, phosphorylation of Ser-407 of the pSXXF motif by ATM or ATR constitutes a specific recognition motif for the BRCT domain of BRCA1.

It is found in the nucleus. In terms of biological role, involved in DNA damage response and double-strand break (DSB) repair. Component of the BRCA1-A complex, acting as a central scaffold protein that assembles the various components of the complex and mediates the recruitment of BRCA1. The BRCA1-A complex specifically recognizes 'Lys-63'-linked ubiquitinated histones H2A and H2AX at DNA lesion sites, leading to target the BRCA1-BARD1 heterodimer to sites of DNA damage at DSBs. This complex also possesses deubiquitinase activity that specifically removes 'Lys-63'-linked ubiquitin on histones H2A and H2AX. The sequence is that of BRCA1-A complex subunit Abraxas 1 from Bos taurus (Bovine).